The sequence spans 208 residues: Type 4 adapter protein LvgA (208 aa).

The T4BSS is a complex nanomachine composed of several subcomplexes. This subunit is part of the Type IV Coupling Complex (T4CC), a subcomplex composed of the DotLMNYZ core and the IcmSW-LvgA adapter subunits, linked by the C-terminal tail of DotL. Interacts with DotL, IcmS and IcmW. Interacts with various effector proteins, including VpdB, SetA, PieA and SidH.

The protein localises to the cytoplasm. Functionally, component of the Dot/Icm type IVB secretion system (T4BSS), which is used to inject bacterial effector proteins into eukaryotic host cells. Part of a subcomplex which recruits effector proteins and delivers them to the core transmembrane subcomplex. Is a critical subunit for binding a subset of effector proteins. Recognizes more than one type of binding motif. May be a critical factor that confers host specificity. This is Type 4 adapter protein LvgA from Legionella pneumophila subsp. pneumophila (strain Philadelphia 1 / ATCC 33152 / DSM 7513).